We begin with the raw amino-acid sequence, 411 residues long: Adherens junction-associated protein 1 (411 aa).

Positions 1–43 (MWIQQLLGLSSMPIRWPGRSLGSHLWILIAMLQLAVDFPSCDS) are cleaved as a signal peptide. Residues 44–283 (LGPGPEFRLL…GETSGLAVHQ (240 aa)) lie on the Extracellular side of the membrane. 3 stretches are compositionally biased toward low complexity: residues 62–76 (LWSL…LPTP), 121–145 (PPAA…AGAA), and 247–264 (TPVG…SNNG). Disordered regions lie at residues 62 to 156 (LWSL…RGRR) and 242 to 270 (DPWK…IQPP). A helical membrane pass occupies residues 284–304 (IITITVSLIMVIAALITTLVL). Residues 304-411 (LKNCCAPSGH…VSEKWFEISC (108 aa)) are targeting signals. The Cytoplasmic segment spans residues 305–411 (KNCCAPSGHT…VSEKWFEISC (107 aa)).

Forms a complex with CDH1 and CTNNB1; interacts directly with CTNNB1. Interacts with AP1M2 and with isoform 2 of BSG/CD147.

It localises to the basolateral cell membrane. Its subcellular location is the apical cell membrane. It is found in the cell junction. The protein resides in the adherens junction. Plays a role in cell adhesion and cell migration. The polypeptide is Adherens junction-associated protein 1 (Ajap1) (Rattus norvegicus (Rat)).